The chain runs to 742 residues: Phosphoribosylformylglycinamidine synthase subunit PurL (742 aa).

Residue H54 is part of the active site. Positions 57 and 96 each coordinate ATP. A Mg(2+)-binding site is contributed by E98. Residues 99-102 (SHNH) and R121 contribute to the substrate site. H100 serves as the catalytic Proton acceptor. D122 serves as a coordination point for Mg(2+). Residues G225 and Q245 each coordinate substrate. D273 serves as a coordination point for Mg(2+). Position 317–319 (317–319 (ESQ)) interacts with substrate. G537 contributes to the ATP binding site. Residue N538 participates in Mg(2+) binding. A substrate-binding site is contributed by S540.

This sequence belongs to the FGAMS family. Monomer. Part of the FGAM synthase complex composed of 1 PurL, 1 PurQ and 2 PurS subunits.

The protein localises to the cytoplasm. The catalysed reaction is N(2)-formyl-N(1)-(5-phospho-beta-D-ribosyl)glycinamide + L-glutamine + ATP + H2O = 2-formamido-N(1)-(5-O-phospho-beta-D-ribosyl)acetamidine + L-glutamate + ADP + phosphate + H(+). It carries out the reaction L-glutamine + H2O = L-glutamate + NH4(+). Its pathway is purine metabolism; IMP biosynthesis via de novo pathway; 5-amino-1-(5-phospho-D-ribosyl)imidazole from N(2)-formyl-N(1)-(5-phospho-D-ribosyl)glycinamide: step 1/2. Its function is as follows. Part of the phosphoribosylformylglycinamidine synthase complex involved in the purines biosynthetic pathway. Catalyzes the ATP-dependent conversion of formylglycinamide ribonucleotide (FGAR) and glutamine to yield formylglycinamidine ribonucleotide (FGAM) and glutamate. The FGAM synthase complex is composed of three subunits. PurQ produces an ammonia molecule by converting glutamine to glutamate. PurL transfers the ammonia molecule to FGAR to form FGAM in an ATP-dependent manner. PurS interacts with PurQ and PurL and is thought to assist in the transfer of the ammonia molecule from PurQ to PurL. This is Phosphoribosylformylglycinamidine synthase subunit PurL from Bacillus subtilis (strain 168).